Reading from the N-terminus, the 323-residue chain is MYIVTGGAGFIGSAMVWKLNEMGIEDIVVVDNLSTSEKWKNLVNRRYVDYVHRDTFMDMVLHGDLPWDVDAVVHMGACSATTERDADFLMENNLRYSRMLCELCMETGARFINASSAATYGDGSLGFSDDDATMLRLKPLNMYGYSKQLFDLWAYREGRLDGIASLKFFNVYGPNEYHKGDMRSVICKAYAQIGQEGVMRLFRSCHPDYADGGQMRDFIYVKDCVEVMWWLLQNPGVNGVFNVGTGKARTWNDLVTAVFRAMDREPVIEYIDMPEQLRGKYQSFTEATMDKLRDAGCPVRFTELEDGVTEYVRQYLAAADPFL.

NADP(+) contacts are provided by residues 10-11 (FI), 31-32 (DN), K38, R53, 75-79 (MGACS), and N92. Y143 (proton acceptor) is an active-site residue. Residue K147 coordinates NADP(+). N170 serves as a coordination point for substrate. NADP(+) is bound by residues V171 and K179. The active-site Proton acceptor is K179. Residues D181, K188, 202–205 (FRSC), R216, and Y281 each bind substrate.

The protein belongs to the NAD(P)-dependent epimerase/dehydratase family. HldD subfamily. In terms of assembly, homopentamer. It depends on NADP(+) as a cofactor.

The catalysed reaction is ADP-D-glycero-beta-D-manno-heptose = ADP-L-glycero-beta-D-manno-heptose. The protein operates within nucleotide-sugar biosynthesis; ADP-L-glycero-beta-D-manno-heptose biosynthesis; ADP-L-glycero-beta-D-manno-heptose from D-glycero-beta-D-manno-heptose 7-phosphate: step 4/4. Catalyzes the interconversion between ADP-D-glycero-beta-D-manno-heptose and ADP-L-glycero-beta-D-manno-heptose via an epimerization at carbon 6 of the heptose. The protein is ADP-L-glycero-D-manno-heptose-6-epimerase of Nitratidesulfovibrio vulgaris (strain DP4) (Desulfovibrio vulgaris).